The primary structure comprises 273 residues: N-alpha-acetyltransferase 30 (273 aa).

Disordered regions lie at residues 1 to 39 and 62 to 85; these read MADA…HQLN and QKTR…PNGL. The N-acetyltransferase domain occupies 125 to 273; the sequence is RYVRYESELQ…DALRLKLWLR (149 aa).

Belongs to the acetyltransferase family. MAK3 subfamily. Component of the N-terminal acetyltransferase C (NatC) complex.

The protein resides in the cytoplasm. Its subcellular location is the nucleus. The catalysed reaction is N-terminal L-methionyl-L-leucyl-[protein] + acetyl-CoA = N-terminal N(alpha)-acetyl-L-methionyl-L-leucyl-[protein] + CoA + H(+). The enzyme catalyses N-terminal L-methionyl-L-isoleucyl-[protein] + acetyl-CoA = N-terminal N(alpha)-acetyl-L-methionyl-L-isoleucyl-[protein] + CoA + H(+). It catalyses the reaction N-terminal L-methionyl-L-phenylalanyl-[protein] + acetyl-CoA = N-terminal N(alpha)-acetyl-L-methionyl-L-phenylalanyl-[protein] + CoA + H(+). It carries out the reaction N-terminal L-methionyl-L-tryptophyl-[protein] + acetyl-CoA = N-terminal N(alpha)-acetyl-L-methionyl-L-tryptophyl-[protein] + CoA + H(+). The catalysed reaction is N-terminal L-methionyl-L-tyrosyl-[protein] + acetyl-CoA = N-terminal N(alpha)-acetyl-L-methionyl-L-tyrosyl-[protein] + CoA + H(+). Its function is as follows. Catalytic subunit of the N-terminal acetyltransferase C (NatC) complex. Catalyzes acetylation of the N-terminal methionine residues of peptides beginning with Met-Leu-Ala and Met-Leu-Gly. N-terminal acetylation protects proteins from ubiquitination and degradation by the N-end rule pathway. This chain is N-alpha-acetyltransferase 30 (naa30), found in Xenopus laevis (African clawed frog).